Consider the following 299-residue polypeptide: Coenzyme PQQ synthesis protein B (299 aa).

This sequence belongs to the PqqB family.

It functions in the pathway cofactor biosynthesis; pyrroloquinoline quinone biosynthesis. Its function is as follows. May be involved in the transport of PQQ or its precursor to the periplasm. This chain is Coenzyme PQQ synthesis protein B, found in Methylobacterium radiotolerans (strain ATCC 27329 / DSM 1819 / JCM 2831 / NBRC 15690 / NCIMB 10815 / 0-1).